Here is a 175-residue protein sequence, read N- to C-terminus: Methylated-DNA--protein-cysteine methyltransferase (175 aa).

C142 serves as the catalytic Nucleophile; methyl group acceptor.

This sequence belongs to the MGMT family.

It is found in the cytoplasm. It carries out the reaction a 6-O-methyl-2'-deoxyguanosine in DNA + L-cysteinyl-[protein] = S-methyl-L-cysteinyl-[protein] + a 2'-deoxyguanosine in DNA. The catalysed reaction is a 4-O-methyl-thymidine in DNA + L-cysteinyl-[protein] = a thymidine in DNA + S-methyl-L-cysteinyl-[protein]. In terms of biological role, involved in the cellular defense against the biological effects of O6-methylguanine (O6-MeG) and O4-methylthymine (O4-MeT) in DNA. Repairs the methylated nucleobase in DNA by stoichiometrically transferring the methyl group to a cysteine residue in the enzyme. This is a suicide reaction: the enzyme is irreversibly inactivated. This Thermococcus sibiricus (strain DSM 12597 / MM 739) protein is Methylated-DNA--protein-cysteine methyltransferase.